A 91-amino-acid polypeptide reads, in one-letter code: Elongation factor 1-beta (91 aa).

Belongs to the EF-1-beta/EF-1-delta family.

Functionally, promotes the exchange of GDP for GTP in EF-1-alpha/GDP, thus allowing the regeneration of EF-1-alpha/GTP that could then be used to form the ternary complex EF-1-alpha/GTP/AAtRNA. The polypeptide is Elongation factor 1-beta (Thermococcus onnurineus (strain NA1)).